We begin with the raw amino-acid sequence, 59 residues long: Lantipeptide Flvbeta.f (59 aa).

Residues 1-27 (MEKMNNIAGITPENELDEMFDDSVVGA) constitute a propeptide, cleaved by FlvT. 2 positions are modified to 2,3-didehydrobutyrine; by FlvM2: T31 and T32. 2 consecutive cross-links (beta-methyllanthionine (Thr-Cys); by FlvM2) follow at residues 41 to 47 (TKNPQIC) and 53 to 56 (TVKC).

In terms of processing, contains DL-beta-methyllanthionine, when coepressed in E.coli with the flavecin synthetase FlvM2.

The protein resides in the secreted. In terms of biological role, lanthionine-containing peptide that does probably not show antibacterial activity, since its analog [+7]Flvbeta.f does not show antibacterial activity against M.luteus. Also does not show antibiotic activity when tested with [Del2]Flvalpha.a, an analog of Flvalpha.a, which is encoded by the same operon than Flvbeta.f. The bactericidal activity of lantibiotics is based on depolarization of energized bacterial cytoplasmic membranes, initiated by the formation of aqueous transmembrane pores. The polypeptide is Lantipeptide Flvbeta.f (Ruminococcus flavefaciens).